The chain runs to 212 residues: Peptide methionine sulfoxide reductase MsrA (212 aa).

Residues 1–14 show a composition bias toward polar residues; the sequence is MSSIDKTQRITQSD. The tract at residues 1-21 is disordered; it reads MSSIDKTQRITQSDALPGRST. Residue Cys52 is part of the active site.

This sequence belongs to the MsrA Met sulfoxide reductase family.

It catalyses the reaction L-methionyl-[protein] + [thioredoxin]-disulfide + H2O = L-methionyl-(S)-S-oxide-[protein] + [thioredoxin]-dithiol. The catalysed reaction is [thioredoxin]-disulfide + L-methionine + H2O = L-methionine (S)-S-oxide + [thioredoxin]-dithiol. In terms of biological role, has an important function as a repair enzyme for proteins that have been inactivated by oxidation. Catalyzes the reversible oxidation-reduction of methionine sulfoxide in proteins to methionine. This is Peptide methionine sulfoxide reductase MsrA from Pectobacterium carotovorum subsp. carotovorum (strain PC1).